The following is a 384-amino-acid chain: G protein-coupled receptor 88 (384 aa).

Topologically, residues 1-35 (MTNSSSTSTSSTTGGSLLLLCEEEESWAGRRIPVS) are extracellular. The N-linked (GlcNAc...) asparagine glycan is linked to Asn-3. A helical membrane pass occupies residues 36–56 (LLYSGLAIGGTLANGMVIYLV). Over 57-73 (SSFRKLQTTSNAFIVNG) the chain is Cytoplasmic. A helical membrane pass occupies residues 74 to 94 (CAADLSVCALWMPQEAVLGLL). Residues 95–116 (PTGSAEPPADWDGAGGSYRLLR) are Extracellular-facing. Residues 117–136 (GGLLGLGLTVSLLSHCLVAL) traverse the membrane as a helical segment. Topologically, residues 137 to 158 (NRYLLITRAPATYQALYQRRHT) are cytoplasmic. A helical membrane pass occupies residues 159–179 (AGMLALSWALALGLVLLLPPW). The Extracellular portion of the chain corresponds to 180–195 (APRPGAAPPRVHYPAL). A helical transmembrane segment spans residues 196-216 (LAAAALLAQTALLLHCYLGIV). Residues 217–285 (RRVRVSVKRV…RAQRRLSGLS (69 aa)) are Cytoplasmic-facing. The helical transmembrane segment at 286–306 (VLLLCCVFLLATQPLVWVSLA) threads the bilayer. At 307–310 (SGFS) the chain is on the extracellular side. A helical membrane pass occupies residues 311-331 (LPVPWGVQAASWLLCCALSAL). Topologically, residues 332–384 (NPLLYTWRNEEFRRSVRSVLPGVGDAAAAAVAATAVPAVSQAQLGTRAAGQHW) are cytoplasmic.

Belongs to the G-protein coupled receptor 1 family. As to expression, expressed predominantly in the striatum.

The protein resides in the cell membrane. The protein localises to the cell projection. It is found in the cilium membrane. It localises to the cytoplasm. Its subcellular location is the nucleus. Functionally, orphan G protein-coupled receptor implicated in a large repertoire of behavioral responses that engage motor activities, spatial learning, and emotional processing. May play a role in the regulation of cognitive and motor function. Couples with the heterotrimeric G protein complex of the G(i) subfamily, consisting of GNAI1, GNB1 and GNG2, thereby acting through a G(i)-mediated pathway. Plays a role in the attenuation of D1 dopamine receptor (D1R)-mediated cAMP response in ciliated cells. In non-ciliated cells, involved in the inhibition of the beta-2 adrenergic receptor (B2AR) response. This is G protein-coupled receptor 88 (GPR88) from Homo sapiens (Human).